Consider the following 201-residue polypeptide: Proteasome subunit beta 1 (201 aa).

Residue Met-1 is a propeptide, removed in mature form; by autocatalysis. Residue Thr-2 is the Nucleophile of the active site.

The protein belongs to the peptidase T1B family. In terms of assembly, the 20S proteasome core is composed of 14 alpha and 14 beta subunits that assemble into four stacked heptameric rings, resulting in a barrel-shaped structure. The two inner rings, each composed of seven catalytic beta subunits, are sandwiched by two outer rings, each composed of seven alpha subunits. The catalytic chamber with the active sites is on the inside of the barrel. Has a gated structure, the ends of the cylinder being occluded by the N-termini of the alpha-subunits. Is capped at one or both ends by the proteasome regulatory ATPase, PAN.

Its subcellular location is the cytoplasm. The enzyme catalyses Cleavage of peptide bonds with very broad specificity.. With respect to regulation, the formation of the proteasomal ATPase PAN-20S proteasome complex, via the docking of the C-termini of PAN into the intersubunit pockets in the alpha-rings, triggers opening of the gate for substrate entry. Interconversion between the open-gate and close-gate conformations leads to a dynamic regulation of the 20S proteasome proteolysis activity. Functionally, component of the proteasome core, a large protease complex with broad specificity involved in protein degradation. The polypeptide is Proteasome subunit beta 1 (Pyrobaculum neutrophilum (strain DSM 2338 / JCM 9278 / NBRC 100436 / V24Sta) (Thermoproteus neutrophilus)).